We begin with the raw amino-acid sequence, 206 residues long: Ribonuclease HII (206 aa).

Residues 14–206 (EFICGIDEVG…FKLRQLGEKV (193 aa)) enclose the RNase H type-2 domain. Residues D20, E21, and D117 each coordinate a divalent metal cation.

It belongs to the RNase HII family. Mn(2+) serves as cofactor. It depends on Mg(2+) as a cofactor.

Its subcellular location is the cytoplasm. The catalysed reaction is Endonucleolytic cleavage to 5'-phosphomonoester.. Functionally, endonuclease that specifically degrades the RNA of RNA-DNA hybrids. This chain is Ribonuclease HII, found in Chlorobium chlorochromatii (strain CaD3).